The following is a 249-amino-acid chain: MFHGKHPEGLSERGRALLLEGGKALGLDLKPHLEAFSRLYALLQEASGKVNLTALRGEEEVVVKHFLDSLTLLRLPLWQGPLRVLDLGTGAGFPGLPLKIVRPELELVLVDATRKKVAFVERAIEVLGLKGARALWGRAEVLAREAGHREAYDRAVARAVAPLCVLSELLLPFLEVGGAAVAMKGPRVEEELAPLPPALERLGGRLGEVLALQLPLSGEARHLVVLEKAAPTPPAYPRRPGVPERYPLC.

Residues glycine 88, phenylalanine 93, 111 to 113 (DAT), 139 to 140 (AE), and arginine 158 contribute to the S-adenosyl-L-methionine site.

The protein belongs to the methyltransferase superfamily. RNA methyltransferase RsmG family.

It localises to the cytoplasm. Specifically methylates the N7 position of a guanine in 16S rRNA. The sequence is that of Ribosomal RNA small subunit methyltransferase G from Thermus thermophilus (strain ATCC BAA-163 / DSM 7039 / HB27).